The sequence spans 190 residues: Inosine triphosphate pyrophosphatase (190 aa).

10–15 (TGNAKK) contacts ITP. Glutamate 40 provides a ligand contact to Mg(2+). ITP is bound by residues lysine 52, 68–69 (DT), lysine 85, 144–147 (FGWD), lysine 167, and 172–173 (HR).

Belongs to the HAM1 NTPase family. In terms of assembly, homodimer. Mg(2+) serves as cofactor. The cofactor is Mn(2+).

The protein resides in the cytoplasm. It carries out the reaction ITP + H2O = IMP + diphosphate + H(+). The enzyme catalyses dITP + H2O = dIMP + diphosphate + H(+). It catalyses the reaction XTP + H2O = XMP + diphosphate + H(+). Functionally, pyrophosphatase that hydrolyzes non-canonical purine nucleotides such as inosine triphosphate (ITP), deoxyinosine triphosphate (dITP) or xanthosine 5'-triphosphate (XTP) to their respective monophosphate derivatives. The enzyme does not distinguish between the deoxy- and ribose forms. Probably excludes non-canonical purines from RNA and DNA precursor pools, thus preventing their incorporation into RNA and DNA and avoiding chromosomal lesions. This Culex quinquefasciatus (Southern house mosquito) protein is Inosine triphosphate pyrophosphatase.